The primary structure comprises 310 residues: Membrane protein insertase YidC 2 (310 aa).

An N-terminal signal peptide occupies residues 1 to 23 (MKKTLKRILFSSLSLSMLLLLTG). Cys-24 carries N-palmitoyl cysteine lipidation. A lipid anchor (S-diacylglycerol cysteine) is attached at Cys-24. Transmembrane regions (helical) follow at residues 33–53 (PYGV…TYFA), 58–78 (LGFG…ILPL), 135–155 (FGGI…AIFF), 180–200 (LTVI…QGVP), and 219–239 (VFMS…GGIF). Residues 266–310 (NPPKAYKANNARKDVTNSTKATESNQAIITSKKTNRNAGKQKRRG) form a disordered region. A compositionally biased stretch (polar residues) spans 281–297 (TNSTKATESNQAIITSK). Over residues 298–310 (KTNRNAGKQKRRG) the composition is skewed to basic residues.

This sequence belongs to the OXA1/ALB3/YidC family. Type 2 subfamily.

Its subcellular location is the cell membrane. Required for the insertion and/or proper folding and/or complex formation of integral membrane proteins into the membrane. Involved in integration of membrane proteins that insert both dependently and independently of the Sec translocase complex, as well as at least some lipoproteins. The protein is Membrane protein insertase YidC 2 of Streptococcus agalactiae serotype V (strain ATCC BAA-611 / 2603 V/R).